A 476-amino-acid polypeptide reads, in one-letter code: Glycogen synthase (476 aa).

Lysine 15 provides a ligand contact to ADP-alpha-D-glucose.

Belongs to the glycosyltransferase 1 family. Bacterial/plant glycogen synthase subfamily.

The enzyme catalyses [(1-&gt;4)-alpha-D-glucosyl](n) + ADP-alpha-D-glucose = [(1-&gt;4)-alpha-D-glucosyl](n+1) + ADP + H(+). Its pathway is glycan biosynthesis; glycogen biosynthesis. In terms of biological role, synthesizes alpha-1,4-glucan chains using ADP-glucose. The chain is Glycogen synthase from Haemophilus influenzae (strain PittEE).